Here is a 1250-residue protein sequence, read N- to C-terminus: Myosin-1 (1250 aa).

The tract at residues 1 to 43 (MGHSRRPAGGEKKSRGFGRSKAAADVGDGRQTGGKPQVKKATF) is disordered. Residues 51–730 (IGVSDLTLLS…TLFALEAMRD (680 aa)) enclose the Myosin motor domain. Residue 144 to 151 (GESGAGKT) coordinates ATP. Ser372 carries the post-translational modification Phosphoserine. Positions 419–501 (SIGILDIYGF…PGVFAALNDA (83 aa)) are actin-binding. IQ domains lie at 734-754 (HNMAIRIQRAWRNYLRYRTEC) and 755-780 (AIRIQRFWRRTTGGLEFIKLRDQGHQ). One can recognise a TH1 domain in the interval 788 to 978 (RRRMSLLGSR…TIHTGPGEPA (191 aa)). Disordered regions lie at residues 962-1079 (DDSY…PKKP) and 1126-1250 (WTPE…DDDW). The span at 1021 to 1035 (AAQPLPRATPQPAAP) shows a compositional bias: pro residues. Low complexity predominate over residues 1036–1051 (QPAARAVPQPVAAVAA). Composition is skewed to pro residues over residues 1064 to 1077 (APPPPPPAAAPAPK) and 1139 to 1151 (TPKPAPPPPPPAA). The SH3 domain occupies 1076–1137 (PKKPTAKVLY…PEAYLEEQVA (62 aa)). The span at 1152 to 1170 (PRSTPAPATNGAAAAAKAK) shows a compositional bias: low complexity. Residues 1201–1222 (VSMNSHDSSGGSGRGTPNSMSN) are compositionally biased toward polar residues. Residues 1223–1232 (ASLAGGLAEA) are compositionally biased toward low complexity.

This sequence belongs to the TRAFAC class myosin-kinesin ATPase superfamily. Myosin family. Phosphorylation of the TEDS site (Ser-372) is required for the polarization of the actin cytoskeleton. Phosphorylation probably activates the myosin-I ATPase activity.

The protein localises to the cytoplasm. It is found in the cytoskeleton. The protein resides in the actin patch. Functionally, type-I myosin implicated in the organization of the actin cytoskeleton. Required for proper actin cytoskeleton polarization. At the cell cortex, assembles in patch-like structures together with proteins from the actin-polymerizing machinery and promotes actin assembly. Functions as actin nucleation-promoting factor (NPF) for the Arp2/3 complex. Plays an important role in polarized growth, spore germination, hyphal morphogenesis, and septal wall formation. The polypeptide is Myosin-1 (myoA) (Neosartorya fischeri (strain ATCC 1020 / DSM 3700 / CBS 544.65 / FGSC A1164 / JCM 1740 / NRRL 181 / WB 181) (Aspergillus fischerianus)).